The following is a 619-amino-acid chain: MKRKLDANDVPSPEAADDSVKNDVDNLDFESLNLDPRLRQALVKEKFTKPTLVQAKAIPLALEGKDILARAKTGSGKTAAYVLPILQTILQKKANDPSLKATTGLILVPTRELAEQVQNVITTFAAFCGKDVRSVNLTQKVSDAVQRTMLADYPDLIVSTPSRVIANLGSSALSLENLTHLVIDEADLVLSYGYDEDINALAKAIPRGVQTFLMSATLTAEVDTLKGLFCRSPVILKLEDKDDQGSGVSQFVVKCAEDEKFLLTYVIFKLQLIKGKVIIFVGDVDRCYRVKLFLEQFGIKSCVLNSELPVNSRLHVVQEFNKGVYDIIIAADEQEVMGARKSKKSKEAEENDAGEAAGSSDEDEGEAQKPSTTRSDKPSEKRRKTAGKDKDYGISRGIDFQNVACVLNFDLPTTSKSYTHRIGRTGRAGKTGMALSFVVPADQFGKHKPTSFPTAKHDETVLAKITKRQAKLGHEVKPYHFEMKQVDAFRYRMTDALRSITRLAVQEARAREIRQELIKSEKLKRHFEENPEELRQLRHDDELRSARIQPHLKHIPDYLMPSKGKKGISSENVGYVGFRKTSENRIRKAREKNRGKGKGRNYAGVKKVDPLKTFNRGRK.

The disordered stretch occupies residues 1 to 22 (MKRKLDANDVPSPEAADDSVKN). The Q motif motif lies at 27 to 55 (LDFESLNLDPRLRQALVKEKFTKPTLVQA). Positions 58–236 (IPLALEGKDI…GLFCRSPVIL (179 aa)) constitute a Helicase ATP-binding domain. 71-78 (AKTGSGKT) contacts ATP. A DEAD box motif is present at residues 184–187 (DEAD). Residues 247–484 (GVSQFVVKCA…EVKPYHFEMK (238 aa)) form the Helicase C-terminal domain. Disordered regions lie at residues 340–391 (RKSK…KDKD) and 586–619 (IRKA…RGRK). A compositionally biased stretch (basic residues) spans 587 to 599 (RKAREKNRGKGKG).

It belongs to the DEAD box helicase family. DDX56/DBP9 subfamily.

The protein localises to the nucleus. The protein resides in the nucleolus. It catalyses the reaction ATP + H2O = ADP + phosphate + H(+). In terms of biological role, ATP-binding RNA helicase involved in the biogenesis of 60S ribosomal subunits and is required for the normal formation of 25S and 5.8S rRNAs. In Aspergillus terreus (strain NIH 2624 / FGSC A1156), this protein is ATP-dependent RNA helicase dbp9 (dbp9).